The sequence spans 398 residues: tRNA-specific 2-thiouridylase MnmA (398 aa).

ATP contacts are provided by residues 20–27 (AMSGGVDS) and L46. The active-site Nucleophile is C114. Cysteines 114 and 210 form a disulfide. An ATP-binding site is contributed by G138. The interaction with tRNA stretch occupies residues 160 to 162 (RDQ). C210 functions as the Cysteine persulfide intermediate in the catalytic mechanism.

The protein belongs to the MnmA/TRMU family.

It is found in the cytoplasm. The enzyme catalyses S-sulfanyl-L-cysteinyl-[protein] + uridine(34) in tRNA + AH2 + ATP = 2-thiouridine(34) in tRNA + L-cysteinyl-[protein] + A + AMP + diphosphate + H(+). In terms of biological role, catalyzes the 2-thiolation of uridine at the wobble position (U34) of tRNA, leading to the formation of s(2)U34. In Brucella melitensis biotype 1 (strain ATCC 23456 / CCUG 17765 / NCTC 10094 / 16M), this protein is tRNA-specific 2-thiouridylase MnmA.